The following is a 229-amino-acid chain: Small ribosomal subunit protein uS2c (229 aa).

This sequence belongs to the universal ribosomal protein uS2 family.

The protein resides in the plastid. Its subcellular location is the chloroplast. This Emiliania huxleyi (Coccolithophore) protein is Small ribosomal subunit protein uS2c (rps2).